Consider the following 431-residue polypeptide: MSDAAPSLSNLFYDPTYNPGQSTINYTSIYGNGSTITFDELQGLVNSTVTQAIMFGVRCGAAALTLIVMWMTSRSRKTPIFIINQVSLFLIILHSALYFKYLLSNYSSVTYALTGFPQFISRGDVHVYGATNIIQVLLVASIETSLVFQIKVIFTGDNFKRIGLMLTSISFTLGIATVTMYFVSAVKGMIVTYNDVSATQDKYFNASTILLASSINFMSFVLVVKLILAIRSRRFLGLKQFDSFHILLIMSCQSLLVPSIIFILAYSLKPNQGTDVLTTVATLLAVLSLPLSSMWATAANNASKTNTITSDFTTSTDRFYPGTLSSFQTDSINNDAKSSLRSRLYDLYPRRKETTSDKHSERTFVSETADDIEKNQFYQLPTPTSSKNTRIGPFADASYKEGEVEPVDMYTPDTAADEEARKFWTEDNNNL.

Residues 1 to 49 are Extracellular-facing; the sequence is MSDAAPSLSNLFYDPTYNPGQSTINYTSIYGNGSTITFDELQGLVNSTV. N-linked (GlcNAc...) asparagine glycans are attached at residues Asn25 and Asn32. The helical transmembrane segment at 50–72 threads the bilayer; sequence TQAIMFGVRCGAAALTLIVMWMT. The Glycine zipper motif motif lies at 53 to 61; the sequence is IMFGVRCGA. The Cytoplasmic portion of the chain corresponds to 73–78; that stretch reads SRSRKT. The chain crosses the membrane as a helical span at residues 79-102; the sequence is PIFIINQVSLFLIILHSALYFKYL. Topologically, residues 103–132 are extracellular; sequence LSNYSSVTYALTGFPQFISRGDVHVYGATN. The chain crosses the membrane as a helical span at residues 133–156; it reads IIQVLLVASIETSLVFQIKVIFTG. Over 157–163 the chain is Cytoplasmic; that stretch reads DNFKRIG. The helical transmembrane segment at 164–188 threads the bilayer; sequence LMLTSISFTLGIATVTMYFVSAVKG. The Extracellular portion of the chain corresponds to 189-205; it reads MIVTYNDVSATQDKYFN. The chain crosses the membrane as a helical span at residues 206 to 230; sequence ASTILLASSINFMSFVLVVKLILAI. The Cytoplasmic portion of the chain corresponds to 231-241; the sequence is RSRRFLGLKQF. The helical transmembrane segment at 242-266 threads the bilayer; sequence DSFHILLIMSCQSLLVPSIIFILAY. Residues 267–275 are Extracellular-facing; the sequence is SLKPNQGTD. The helical transmembrane segment at 276-299 threads the bilayer; the sequence is VLTTVATLLAVLSLPLSSMWATAA. At 300 to 431 the chain is on the cytoplasmic side; the sequence is NNASKTNTIT…KFWTEDNNNL (132 aa). Ser310 and Ser315 each carry phosphoserine. The residue at position 329 (Thr329) is a Phosphothreonine. Ser331 is subject to Phosphoserine. Lys337 is covalently cross-linked (Glycyl lysine isopeptide (Lys-Gly) (interchain with G-Cter in ubiquitin)). Position 360 is a phosphoserine (Ser360). A Phosphothreonine modification is found at Thr363. A Phosphoserine modification is found at Ser366. Lys374 is covalently cross-linked (Glycyl lysine isopeptide (Lys-Gly) (interchain with G-Cter in ubiquitin)). Residues 379–389 show a composition bias toward polar residues; the sequence is QLPTPTSSKNT. The segment at 379–406 is disordered; sequence QLPTPTSSKNTRIGPFADASYKEGEVEP. Phosphothreonine is present on Thr382. Residues Ser385 and Ser386 each carry the phosphoserine modification. Lys400 participates in a covalent cross-link: Glycyl lysine isopeptide (Lys-Gly) (interchain with G-Cter in ubiquitin). 2 positions are modified to phosphothreonine: Thr411 and Thr414. Lys422 participates in a covalent cross-link: Glycyl lysine isopeptide (Lys-Gly) (interchain with G-Cter in ubiquitin).

The protein belongs to the G-protein coupled receptor 4 family. In terms of assembly, homodimer. Might also for higher order homooligomers such as homotetramers. Oligomerization is mediated significantly by transmembrane domain 1 (TMD1), possibly in concert with the N-terminal extracellular domain and TMD2. Interaction with GPA1, its dedicated G-alpha protein. Undergoes hyperphosphorylation of the C-terminal cytoplasmic domain after binding of the alpha-factor, which leads to internalization by endocytosis. Post-translationally, monoubiquitination at Lys-337 triggers internalization of STE2. In terms of processing, N-glycosylated. N-glycosylation may be involved in the sorting process for misfolded STE2 protein. As to expression, expressed in MATa strains but not in MATalpha strains.

The protein resides in the cell membrane. Its function is as follows. Fungal class D1 G-protein-coupled receptor that acts as an alpha-factor pheromone receptor performing pheromone-dependent signal transduction involved in cellular conjugation, mating projection assembly, and in cell fusion. Following alpha-factor-binding, the signal is transmitted via a tripartite G protein consisting of alpha-, beta- and gamma-subunits (GAP1, STE4 and STE8 respectively) that prepares the cell for conjugation. In the inactive state, the cytoplasmic end of transmembrane domain 7 (TMD7) is unstructured and packs between TMD1-6, blocking the G protein coupling site. Agonist binding results in the outward movement of the extracellular ends of TMD6 and TMD7 by 6 Angstroms. On the intracellular surface, the G protein coupling site is formed by a 20 Angstroms outward movement of the unstructured region in TMD7 that unblocks the site, and a 12 Angstroms inward movement of TMD6. The chain is Pheromone alpha factor receptor (STE2) from Saccharomyces cerevisiae (strain ATCC 204508 / S288c) (Baker's yeast).